Reading from the N-terminus, the 506-residue chain is Squalene monooxygenase 1,1 (506 aa).

The next 2 helical transmembrane spans lie at 3 to 23 (LAFPHVCLWTLLAFVLTWTVF) and 47 to 67 (DADVIIVGAGVGGSALAYALA). FAD is bound by residues 57 to 58 (VG), 77 to 78 (ER), arginine 85, phenylalanine 90, arginine 157, valine 173, aspartate 336, and methionine 349. The helical transmembrane segment at 447-467 (LIFHLCGITLSSIGQLLSPFP) threads the bilayer.

Belongs to the squalene monooxygenase family. FAD serves as cofactor.

Its subcellular location is the membrane. It catalyses the reaction squalene + reduced [NADPH--hemoprotein reductase] + O2 = (S)-2,3-epoxysqualene + oxidized [NADPH--hemoprotein reductase] + H2O + H(+). The protein operates within terpene metabolism; lanosterol biosynthesis; lanosterol from farnesyl diphosphate: step 2/3. In terms of biological role, catalyzes the stereospecific oxidation of squalene to (S)-2,3-epoxysqualene, and is considered to be a rate-limiting enzyme in steroid biosynthesis. The protein is Squalene monooxygenase 1,1 (SQP1,1) of Brassica napus (Rape).